We begin with the raw amino-acid sequence, 239 residues long: Transcription factor MYB10 (239 aa).

2 HTH myb-type domains span residues 11–63 and 64–118; these read KSQV…INYL and RPGL…KKRL. 2 DNA-binding regions (H-T-H motif) span residues 39–63 and 91–114; these read WRSL…INYL and WSKI…NTHL.

As to expression, expressed in cauline leaves and siliques.

It is found in the nucleus. In terms of biological role, involved in metal ions homeostasis, including iron ions (Fe) acquisition, via the regulation of NAS4 and NAS2 genes expression. Necessary for plant survival in alkaline soil where iron availability is greatly restricted. Triggers tolerance to nickel (Ni) and zinc (Zn) ions. This Arabidopsis thaliana (Mouse-ear cress) protein is Transcription factor MYB10.